The sequence spans 195 residues: ATP-dependent Clp protease proteolytic subunit 2 (195 aa).

Serine 98 functions as the Nucleophile in the catalytic mechanism. The active site involves histidine 123.

It belongs to the peptidase S14 family. As to quaternary structure, fourteen ClpP subunits assemble into 2 heptameric rings which stack back to back to give a disk-like structure with a central cavity, resembling the structure of eukaryotic proteasomes.

Its subcellular location is the cytoplasm. It carries out the reaction Hydrolysis of proteins to small peptides in the presence of ATP and magnesium. alpha-casein is the usual test substrate. In the absence of ATP, only oligopeptides shorter than five residues are hydrolyzed (such as succinyl-Leu-Tyr-|-NHMec, and Leu-Tyr-Leu-|-Tyr-Trp, in which cleavage of the -Tyr-|-Leu- and -Tyr-|-Trp bonds also occurs).. Cleaves peptides in various proteins in a process that requires ATP hydrolysis. Has a chymotrypsin-like activity. Plays a major role in the degradation of misfolded proteins. This chain is ATP-dependent Clp protease proteolytic subunit 2, found in Rhodopirellula baltica (strain DSM 10527 / NCIMB 13988 / SH1).